A 142-amino-acid chain; its full sequence is Large ribosomal subunit protein uL11 (142 aa).

The protein belongs to the universal ribosomal protein uL11 family. In terms of assembly, part of the ribosomal stalk of the 50S ribosomal subunit. Interacts with L10 and the large rRNA to form the base of the stalk. L10 forms an elongated spine to which L12 dimers bind in a sequential fashion forming a multimeric L10(L12)X complex. Post-translationally, one or more lysine residues are methylated.

Its function is as follows. Forms part of the ribosomal stalk which helps the ribosome interact with GTP-bound translation factors. The sequence is that of Large ribosomal subunit protein uL11 from Thermobifida fusca (strain YX).